The chain runs to 346 residues: MAVYAVTGGAGFLGRYIVKLLISADDVQEIRVIDIVEDPQPITSKVKVINYIQCDINDFDKVREALDGVNLIIHTAALVDVFGKYTDNEIMKVNYYGTQTILAACVDLGIKYLIYTSSMEAIGPNKHGDPFIGHEHTLYDISPGHVYAKSKRMAEQLVMKANNSVIMNGAKLYTCCLRPTGIYGEGDKLTKVFYEQCKQHGNIMYRTVDDNAVHSRVYVGNAAWMHVLAAKYIQYPGSKIKGNAYFCYDYSPSCSYDMFNLLLMKPLGIEQGSRIPRWMLKMYACKNDMKRILFRKPSLLNNYTLKISNTTFEVRTNNAELDFNYSPIFDVDVAFKRTRKWLEESE.

Tyr147 (proton acceptor) is an active-site residue. Lys151 is a binding site for NAD(+).

The protein belongs to the 3-beta-HSD family.

It catalyses the reaction a 3beta-hydroxy-Delta(5)-steroid + NAD(+) = a 3-oxo-Delta(5)-steroid + NADH + H(+). The enzyme catalyses a 3-oxo-Delta(5)-steroid = a 3-oxo-Delta(4)-steroid. Its pathway is lipid metabolism; steroid biosynthesis. Its function is as follows. Catalyzes the oxidative conversion of Delta(5)-ene-3-beta-hydroxy steroid, and the oxidative conversion of ketosteroids. The 3-beta-HSD enzymatic system plays a crucial role in the biosynthesis of all classes of hormonal steroids. During viral infection, steroid production contributes to virulence by inhibiting the host inflammatory response. This chain is 3 beta-hydroxysteroid dehydrogenase/Delta 5--&gt;4-isomerase (OPG174), found in Homo sapiens (Human).